The chain runs to 411 residues: MDPESFSAAFFKWDQRPPALAPPQMQRSAGLEAQRIFHDFGVPNAAAMAASNNSSSCRKELNCLEELFRNYGVRYITLTKMVDMGFTVNTLVNMTEQELDDLVRTLVEIYRVELLVGEKYGIKSAIRAEKRRLEEAERKRMEQLFVDVDGKRKIDENALDTLSQEGLSVEEPQGDNAIILSQNNTSANFPLNLNAGMDPVLILQNSGHLGTTVSGLIGMPDTNYGSEQTKACKKQKRRRSKDSGEDGEERQREHPFIVTEPGELARGKKNGLDYLFDLYEQCGKFLLDVQHIAKERGEKCPTKVTNQVFRHAKHSGAGYINKPKMRHYVHCYALHCLDIEQSNRLRRAYKERGENVGAWRQACYYPLVAMAKDNGWDIEGVFNKHEKLRIWYVPTKLRQLCHLEKSKQSHL.

The segment at 220 to 259 (PDTNYGSEQTKACKKQKRRRSKDSGEDGEERQREHPFIVT) is disordered. Residues 231–240 (ACKKQKRRRS) are compositionally biased toward basic residues. Positions 241–255 (KDSGEDGEERQREHP) are enriched in basic and acidic residues. 3 consecutive DNA-binding regions follow at residues 252–256 (REHPF), 321–328 (NKPKMRHY), and 392–395 (YVPT).

The protein belongs to the FLO/LFY family. As to expression, expressed in vegetative buds and male cones but not in female cones, vascular tissue, roots or secondary needles.

It localises to the nucleus. In terms of biological role, probable transcription factor. The polypeptide is Floricaula/leafy-like protein (FLL) (Pinus radiata (Monterey pine)).